The following is a 728-amino-acid chain: Catalase-peroxidase (728 aa).

The tryptophyl-tyrosyl-methioninium (Trp-Tyr) (with M-244) cross-link spans 91-218 (WHSAGTYRTA…LAAVQMGLIY (128 aa)). Catalysis depends on H92, which acts as the Proton acceptor. Residues 218 to 244 (YVNPEGPDGNPDPVAAARDIRDTFARM) constitute a cross-link (tryptophyl-tyrosyl-methioninium (Tyr-Met) (with W-91)). H259 is a binding site for heme b.

This sequence belongs to the peroxidase family. Peroxidase/catalase subfamily. In terms of assembly, homodimer or homotetramer. Requires heme b as cofactor. Formation of the three residue Trp-Tyr-Met cross-link is important for the catalase, but not the peroxidase activity of the enzyme.

It carries out the reaction H2O2 + AH2 = A + 2 H2O. The enzyme catalyses 2 H2O2 = O2 + 2 H2O. In terms of biological role, bifunctional enzyme with both catalase and broad-spectrum peroxidase activity. The chain is Catalase-peroxidase from Burkholderia mallei (strain NCTC 10247).